The chain runs to 130 residues: Large ribosomal subunit protein bL19 (130 aa).

The protein belongs to the bacterial ribosomal protein bL19 family.

Functionally, this protein is located at the 30S-50S ribosomal subunit interface and may play a role in the structure and function of the aminoacyl-tRNA binding site. The sequence is that of Large ribosomal subunit protein bL19 from Mycoplasma mycoides subsp. mycoides SC (strain CCUG 32753 / NCTC 10114 / PG1).